Reading from the N-terminus, the 287-residue chain is Ribosomal RNA small subunit methyltransferase A (287 aa).

Asparagine 28, leucine 30, glycine 55, glutamate 77, aspartate 103, and asparagine 123 together coordinate S-adenosyl-L-methionine.

It belongs to the class I-like SAM-binding methyltransferase superfamily. rRNA adenine N(6)-methyltransferase family. RsmA subfamily.

It localises to the cytoplasm. It carries out the reaction adenosine(1518)/adenosine(1519) in 16S rRNA + 4 S-adenosyl-L-methionine = N(6)-dimethyladenosine(1518)/N(6)-dimethyladenosine(1519) in 16S rRNA + 4 S-adenosyl-L-homocysteine + 4 H(+). Specifically dimethylates two adjacent adenosines (A1518 and A1519) in the loop of a conserved hairpin near the 3'-end of 16S rRNA in the 30S particle. May play a critical role in biogenesis of 30S subunits. The protein is Ribosomal RNA small subunit methyltransferase A of Rhodopseudomonas palustris (strain BisB5).